Reading from the N-terminus, the 727-residue chain is Non-structural protein 4 (727 aa).

Disordered regions lie at residues 1-38 and 673-727; these read MNQS…PSEG and SMTL…KLSK. Positions 17–38 are enriched in polar residues; that stretch reads RTPSALSSNSETPGSMSSPSEG. The span at 712-727 shows a compositional bias: basic residues; sequence SRRKARKARAASKLSK.

The protein is Non-structural protein 4 of Rice dwarf virus (isolate Akita) (RDV).